A 390-amino-acid chain; its full sequence is LL-diaminopimelate aminotransferase 2 (390 aa).

The substrate site is built by Y13 and G38. Residues Y67, 102 to 103, Y127, N177, Y208, and 236 to 238 each bind pyridoxal 5'-phosphate; these read SK and SLS. The substrate site is built by K103, Y127, and N177. K239 carries the N6-(pyridoxal phosphate)lysine modification. R247 contributes to the pyridoxal 5'-phosphate binding site. R365 contributes to the substrate binding site.

It belongs to the class-I pyridoxal-phosphate-dependent aminotransferase family. LL-diaminopimelate aminotransferase subfamily. Homodimer. Requires pyridoxal 5'-phosphate as cofactor.

The enzyme catalyses (2S,6S)-2,6-diaminopimelate + 2-oxoglutarate = (S)-2,3,4,5-tetrahydrodipicolinate + L-glutamate + H2O + H(+). It participates in amino-acid biosynthesis; L-lysine biosynthesis via DAP pathway; LL-2,6-diaminopimelate from (S)-tetrahydrodipicolinate (aminotransferase route): step 1/1. Involved in the synthesis of meso-diaminopimelate (m-DAP or DL-DAP), required for both lysine and peptidoglycan biosynthesis. Catalyzes the direct conversion of tetrahydrodipicolinate to LL-diaminopimelate. The polypeptide is LL-diaminopimelate aminotransferase 2 (Trichormus variabilis (strain ATCC 29413 / PCC 7937) (Anabaena variabilis)).